We begin with the raw amino-acid sequence, 97 residues long: HssA/B-like protein 47 (97 aa).

The interval 1 to 33 (MTLFSSISSISNPMTSSKSSIASFGSGTSMSSN) is disordered.

Belongs to the hssA/B family.

This chain is HssA/B-like protein 47 (hssl47), found in Dictyostelium discoideum (Social amoeba).